The chain runs to 292 residues: 31 kDa ribonucleoprotein, chloroplastic (292 aa).

Positions 88–166 (LKLFVGNLPF…RAIRVNAGPA (79 aa)) constitute an RRM 1 domain. Residues 165 to 203 (PAPAKRENSSFGGGRGGNSSYGGGRDGNSSFGGARGGRS) form a disordered region. The linker (Gly-rich) stretch occupies residues 167-207 (PAKRENSSFGGGRGGNSSYGGGRDGNSSFGGARGGRSVDSS). Positions 175-190 (FGGGRGGNSSYGGGRD) are enriched in gly residues. In terms of domain architecture, RRM 2 spans 208–286 (NRVYVGNLSW…RSIRVSAAEE (79 aa)).

Expressed at high levels in the leaves and seedlings, and lower levels are seen in the stems and roots.

It localises to the plastid. Its subcellular location is the chloroplast. The chain is 31 kDa ribonucleoprotein, chloroplastic from Nicotiana plumbaginifolia (Leadwort-leaved tobacco).